We begin with the raw amino-acid sequence, 153 residues long: uncharacterized protein (153 aa).

The first 25 residues, 1–25, serve as a signal peptide directing secretion; it reads MKKRQYLKSLYVALLGTLCYLSVNA.

This is an uncharacterized protein from Pasteurella multocida (strain Pm70).